Consider the following 122-residue polypeptide: Large ribosomal subunit protein uL18 (122 aa).

This sequence belongs to the universal ribosomal protein uL18 family. Part of the 50S ribosomal subunit; part of the 5S rRNA/L5/L18/L25 subcomplex. Contacts the 5S and 23S rRNAs.

Its function is as follows. This is one of the proteins that bind and probably mediate the attachment of the 5S RNA into the large ribosomal subunit, where it forms part of the central protuberance. This Pseudothermotoga lettingae (strain ATCC BAA-301 / DSM 14385 / NBRC 107922 / TMO) (Thermotoga lettingae) protein is Large ribosomal subunit protein uL18.